A 198-amino-acid polypeptide reads, in one-letter code: Probable molybdenum cofactor guanylyltransferase (198 aa).

GTP is bound by residues 9 to 11 (LAG), Lys-22, Asp-66, and Asp-95. Asp-95 provides a ligand contact to Mg(2+).

The protein belongs to the MobA family. It depends on Mg(2+) as a cofactor.

The protein localises to the cytoplasm. The enzyme catalyses Mo-molybdopterin + GTP + H(+) = Mo-molybdopterin guanine dinucleotide + diphosphate. Its function is as follows. Transfers a GMP moiety from GTP to Mo-molybdopterin (Mo-MPT) cofactor (Moco or molybdenum cofactor) to form Mo-molybdopterin guanine dinucleotide (Mo-MGD) cofactor. In Clostridium perfringens (strain ATCC 13124 / DSM 756 / JCM 1290 / NCIMB 6125 / NCTC 8237 / Type A), this protein is Probable molybdenum cofactor guanylyltransferase.